We begin with the raw amino-acid sequence, 342 residues long: N-acetyl-gamma-glutamyl-phosphate reductase (342 aa).

Residue Cys147 is part of the active site.

This sequence belongs to the NAGSA dehydrogenase family. Type 1 subfamily.

The protein localises to the cytoplasm. It catalyses the reaction N-acetyl-L-glutamate 5-semialdehyde + phosphate + NADP(+) = N-acetyl-L-glutamyl 5-phosphate + NADPH + H(+). The protein operates within amino-acid biosynthesis; L-arginine biosynthesis; N(2)-acetyl-L-ornithine from L-glutamate: step 3/4. Functionally, catalyzes the NADPH-dependent reduction of N-acetyl-5-glutamyl phosphate to yield N-acetyl-L-glutamate 5-semialdehyde. This chain is N-acetyl-gamma-glutamyl-phosphate reductase, found in Campylobacter jejuni subsp. jejuni serotype O:6 (strain 81116 / NCTC 11828).